The chain runs to 524 residues: Hydroxysteroid dehydrogenase-like protein 2 (524 aa).

Residues 17–23, Lys-42, and Asp-74 each bind NADP(+); that span reads GASRGIG. Position 42 is an N6-(2-hydroxyisobutyryl)lysine (Lys-42). Residue Lys-116 is modified to N6-acetyllysine. The active-site Proton acceptor is Tyr-168. Residue Lys-172 participates in NADP(+) binding. The span at 283–300 shows a compositional bias: basic and acidic residues; it reads EEKESYDPVPEVKEEKLQ. The tract at residues 283-410 is disordered; the sequence is EEKESYDPVP…PLLQSVLPPK (128 aa). Positions 301 to 391 are enriched in low complexity; the sequence is LQEQPQLQEQ…QQQPQQRPQQ (91 aa). The SCP2 domain occupies 414–521; that stretch reads GAVEETFRIV…KLEKLMTHMN (108 aa). Lys-424 carries the post-translational modification N6-succinyllysine.

Belongs to the short-chain dehydrogenases/reductases (SDR) family.

It localises to the peroxisome. The protein resides in the mitochondrion. In terms of biological role, has apparently no steroid dehydrogenase activity. Controls bile acid (BA) and lipid metabolism in response to nutritional cues. This Rattus norvegicus (Rat) protein is Hydroxysteroid dehydrogenase-like protein 2 (Hsdl2).